A 186-amino-acid chain; its full sequence is Peptidyl-tRNA hydrolase (186 aa).

Tyr14 contacts tRNA. The Proton acceptor role is filled by His19. Positions 64, 66, and 112 each coordinate tRNA.

It belongs to the PTH family. As to quaternary structure, monomer.

The protein resides in the cytoplasm. It carries out the reaction an N-acyl-L-alpha-aminoacyl-tRNA + H2O = an N-acyl-L-amino acid + a tRNA + H(+). Functionally, hydrolyzes ribosome-free peptidyl-tRNAs (with 1 or more amino acids incorporated), which drop off the ribosome during protein synthesis, or as a result of ribosome stalling. Its function is as follows. Catalyzes the release of premature peptidyl moieties from peptidyl-tRNA molecules trapped in stalled 50S ribosomal subunits, and thus maintains levels of free tRNAs and 50S ribosomes. The chain is Peptidyl-tRNA hydrolase from Listeria monocytogenes serovar 1/2a (strain ATCC BAA-679 / EGD-e).